A 153-amino-acid polypeptide reads, in one-letter code: MLDELRAEKNFPSKPYDSLKNKSEFDRVYQRGFKKHNSFFSLFVLDASKEPSHFKNPFFCRLKDTEKSCLLGLSVSKKVGNAVKRNLIKRRLRSLVLKHASLCQGFALVFVPKKDCERLDFLTLEKHFLEMLISIKGYMNKKEKGTNHTYAKP.

It belongs to the RnpA family. Consists of a catalytic RNA component (M1 or rnpB) and a protein subunit.

The enzyme catalyses Endonucleolytic cleavage of RNA, removing 5'-extranucleotides from tRNA precursor.. In terms of biological role, RNaseP catalyzes the removal of the 5'-leader sequence from pre-tRNA to produce the mature 5'-terminus. It can also cleave other RNA substrates such as 4.5S RNA. The protein component plays an auxiliary but essential role in vivo by binding to the 5'-leader sequence and broadening the substrate specificity of the ribozyme. In Helicobacter acinonychis (strain Sheeba), this protein is Ribonuclease P protein component.